The chain runs to 91 residues: Putative septation protein SpoVG (91 aa).

It belongs to the SpoVG family.

Functionally, could be involved in septation. This Clostridium beijerinckii (strain ATCC 51743 / NCIMB 8052) (Clostridium acetobutylicum) protein is Putative septation protein SpoVG.